Here is a 232-residue protein sequence, read N- to C-terminus: 2,3,4,5-tetrahydropyridine-2,6-dicarboxylate N-acetyltransferase (232 aa).

It belongs to the transferase hexapeptide repeat family. DapH subfamily.

The enzyme catalyses (S)-2,3,4,5-tetrahydrodipicolinate + acetyl-CoA + H2O = L-2-acetamido-6-oxoheptanedioate + CoA. It functions in the pathway amino-acid biosynthesis; L-lysine biosynthesis via DAP pathway; LL-2,6-diaminopimelate from (S)-tetrahydrodipicolinate (acetylase route): step 1/3. Its function is as follows. Catalyzes the transfer of an acetyl group from acetyl-CoA to tetrahydrodipicolinate. The chain is 2,3,4,5-tetrahydropyridine-2,6-dicarboxylate N-acetyltransferase from Streptococcus pneumoniae (strain CGSP14).